Reading from the N-terminus, the 411-residue chain is Phospholipase ABHD3 (411 aa).

Residues 25 to 45 (VGFFGSGVGFSLILGFSVAYA) traverse the membrane as a helical; Signal-anchor for type II membrane protein segment. The AB hydrolase-1 domain maps to 140 to 247 (PTVLLLPGLT…PLKAAATFSV (108 aa)). Active-site charge relay system residues include Ser-220, Asp-346, and His-375.

It belongs to the AB hydrolase superfamily. AB hydrolase 4 family.

Its subcellular location is the membrane. The catalysed reaction is a 1,2-diacyl-sn-glycero-3-phosphocholine + H2O = a 1-acyl-sn-glycero-3-phosphocholine + a fatty acid + H(+). It carries out the reaction a 1,2-diacyl-sn-glycero-3-phosphocholine + H2O = a 2-acyl-sn-glycero-3-phosphocholine + a fatty acid + H(+). It catalyses the reaction 1-tetradecanoyl-2-(9Z,12Z-octadecadienoyl)-sn-glycero-3-phosphocholine + H2O = 2-(9Z,12Z-octadecadienoyl)-sn-glycero-3-phosphocholine + tetradecanoate + H(+). The enzyme catalyses 1-tetradecanoyl-2-(9Z,12Z-octadecadienoyl)-sn-glycero-3-phosphocholine + H2O = 1-tetradecanoyl-sn-glycero-3-phosphocholine + (9Z,12Z)-octadecadienoate + H(+). The catalysed reaction is 1-tetradecanoyl-2-(5Z,8Z,11Z,14Z-eicosatetraenoyl)-sn-glycero-3-phosphocholine + H2O = 2-(5Z,8Z,11Z,14Z)-eicosatetraenoyl-sn-glycero-3-phosphocholine + tetradecanoate + H(+). It carries out the reaction 1-tetradecanoyl-2-(4Z,7Z,10Z,13Z,16Z,19Z-docosahexaenoyl)-sn-glycero-3-phosphocholine + H2O = 2-(4Z,7Z,10Z,13Z,16Z,19Z-docosahexaenoyl)-sn-glycero-3-phosphocholine + tetradecanoate + H(+). It catalyses the reaction 1,2-ditetradecanoyl-sn-glycero-3-phosphocholine + H2O = 2-tetradecanoyl-sn-glycero-3-phosphocholine + tetradecanoate + H(+). The enzyme catalyses 1-octadecanoyl-2-acetyl-sn-glycero-3-phosphocholine + H2O = 1-octadecanoyl-sn-glycero-3-phosphocholine + acetate + H(+). The catalysed reaction is 1,2-ditetradecanoyl-sn-glycero-3-phosphocholine + H2O = 1-tetradecanoyl-sn-glycero-3-phosphocholine + tetradecanoate + H(+). It carries out the reaction 1-octadecanoyl-2-pentanoyl-sn-glycero-3-phosphocholine + H2O = pentanoate + 1-octadecanoyl-sn-glycero-3-phosphocholine + H(+). It catalyses the reaction 1-octadecanoyl-2-hexanoyl-sn-glycero-3-phosphocholine + H2O = hexanoate + 1-octadecanoyl-sn-glycero-3-phosphocholine + H(+). The enzyme catalyses 1-octadecanoyl-2-octanoyl-sn-glycero-3-phosphocholine + H2O = 1-octadecanoyl-sn-glycero-3-phosphocholine + octanoate + H(+). The catalysed reaction is 1-octadecanoyl-2-nonanoyl-sn-glycero-3-phosphocholine + H2O = nonanoate + 1-octadecanoyl-sn-glycero-3-phosphocholine + H(+). It carries out the reaction 1-O-hexadecyl-2-nonadioyl-sn-glycero-3-phosphocholine + H2O = nonanedioate + 1-O-hexadecyl-sn-glycero-3-phosphocholine + H(+). It catalyses the reaction 1-hexadecanoyl-2-nonadioyl-sn-glycero-3-phosphocholine + H2O = nonanedioate + 1-hexadecanoyl-sn-glycero-3-phosphocholine + H(+). The enzyme catalyses 1-hexadecanoyl-2-(9-oxononanoyl)-sn-glycero-3-phosphocholine + H2O = 9-oxononanoate + 1-hexadecanoyl-sn-glycero-3-phosphocholine + H(+). The catalysed reaction is 1-hexadecanoyl-2-(5-oxopentanoyl)-sn-glycero-3-phosphocholine + H2O = 5-oxopentanoate + 1-hexadecanoyl-sn-glycero-3-phosphocholine + H(+). It carries out the reaction 1-hexadecanoyl-2-glutaroyl-sn-glycero-3-phosphocholine + H2O = glutarate + 1-hexadecanoyl-sn-glycero-3-phosphocholine + H(+). It catalyses the reaction 1-O-hexadecyl-2-acetyl-sn-glycero-3-phosphocholine + H2O = 1-O-hexadecyl-sn-glycero-3-phosphocholine + acetate + H(+). Functionally, phospholipase that may play a role in phospholipids remodeling. May selectively cleave myristate (C14)-containing phosphatidylcholines through its predominant phospholipase 1 activity, cleaving preferentially acyl groups in sn1 position. In parallel, may have a minor phospholipase 2 activity acting on acyl groups in position sn2. In addition to (C14)-containing phosphatidylcholines, may also act on other medium-chain-containing and oxidatively truncated phospholipids. The sequence is that of Phospholipase ABHD3 from Bos taurus (Bovine).